The chain runs to 542 residues: Endonuclease 4 homolog (542 aa).

Disordered regions lie at residues 89–123 and 141–234; these read NEEI…QTSI and PFFS…ENKF. Composition is skewed to low complexity over residues 99–115 and 147–170; these read SKKL…QQSK and NNAS…TTTT. Residues 171-206 are a coiled coil; sequence TKKRNNKDEENEDDNEEEEEEEEEEEDKKSKKKTTT. Positions 179–196 are enriched in acidic residues; that stretch reads EENEDDNEEEEEEEEEEE. Over residues 205 to 215 the composition is skewed to low complexity; the sequence is TTTTTTTTTTA. Basic residues predominate over residues 216–227; it reads YKKKSSPKKKKV. Residues 222-227 carry the Nuclear localization signal motif; that stretch reads PKKKKV. Positions 328, 368, 404, 438, 441, 475, 488, 490, and 520 each coordinate Zn(2+).

The protein belongs to the AP endonuclease 2 family. The cofactor is Zn(2+).

Its subcellular location is the nucleus. The catalysed reaction is Endonucleolytic cleavage to 5'-phosphooligonucleotide end-products.. Functionally, plays a role in DNA repair. It cleaves phosphodiester bonds at apurinic or apyrimidinic sites (AP sites) to produce new 5'-ends that are base-free deoxyribose 5-phosphate residues. In Dictyostelium discoideum (Social amoeba), this protein is Endonuclease 4 homolog (apnA).